Here is a 262-residue protein sequence, read N- to C-terminus: UPF0619 GPI-anchored membrane protein C1322.10 (262 aa).

Residues 1 to 20 (MLARVGTTLFFLANALAAYA) form the signal peptide. Disordered regions lie at residues 136 to 165 (STSA…SSST) and 175 to 194 (ISSS…SGSI). Residues N207 and N227 are each glycosylated (N-linked (GlcNAc...) asparagine). The GPI-like-anchor amidated asparagine moiety is linked to residue N242. The propeptide at 243–262 (GVAQLSVAACMGIAALMLIA) is removed in mature form.

This sequence belongs to the UPF0619 family.

It is found in the golgi apparatus membrane. It localises to the cell membrane. The protein is UPF0619 GPI-anchored membrane protein C1322.10 of Schizosaccharomyces pombe (strain 972 / ATCC 24843) (Fission yeast).